Here is a 180-residue protein sequence, read N- to C-terminus: Negative modulator of initiation of replication (180 aa).

Interaction with DNA stretches follow at residues 86–87, 115–119, and 149–155; these read AV, RTRVY, and NTNTGRK.

Belongs to the SeqA family. As to quaternary structure, homodimer. Polymerizes to form helical filaments.

The protein resides in the cytoplasm. Negative regulator of replication initiation, which contributes to regulation of DNA replication and ensures that replication initiation occurs exactly once per chromosome per cell cycle. Binds to pairs of hemimethylated GATC sequences in the oriC region, thus preventing assembly of replication proteins and re-initiation at newly replicated origins. Repression is relieved when the region becomes fully methylated. The protein is Negative modulator of initiation of replication of Salmonella typhimurium (strain LT2 / SGSC1412 / ATCC 700720).